Consider the following 103-residue polypeptide: ATP synthase F(0) complex subunit g, mitochondrial (103 aa).

Ala2 is modified (N-acetylalanine). N6-acetyllysine is present on residues Lys11, Lys24, Lys35, and Lys54.

It belongs to the ATPase g subunit family. In terms of assembly, component of the ATP synthase complex composed at least of ATP5F1A/subunit alpha, ATP5F1B/subunit beta, ATP5MC1/subunit c (homooctomer), MT-ATP6/subunit a, MT-ATP8/subunit 8, ATP5ME/subunit e, ATP5MF/subunit f, ATP5MG/subunit g, ATP5MK/subunit k, ATP5MJ/subunit j, ATP5F1C/subunit gamma, ATP5F1D/subunit delta, ATP5F1E/subunit epsilon, ATP5PF/subunit F6, ATP5PB/subunit b, ATP5PD/subunit d, ATP5PO/subunit OSCP. ATP synthase complex consists of a soluble F(1) head domain (subunits alpha(3) and beta(3)) - the catalytic core - and a membrane F(0) domain - the membrane proton channel (subunits c, a, 8, e, f, g, k and j). These two domains are linked by a central stalk (subunits gamma, delta, and epsilon) rotating inside the F1 region and a stationary peripheral stalk (subunits F6, b, d, and OSCP).

The protein localises to the mitochondrion. The protein resides in the mitochondrion inner membrane. In terms of biological role, subunit g, of the mitochondrial membrane ATP synthase complex (F(1)F(0) ATP synthase or Complex V) that produces ATP from ADP in the presence of a proton gradient across the membrane which is generated by electron transport complexes of the respiratory chain. ATP synthase complex consist of a soluble F(1) head domain - the catalytic core - and a membrane F(1) domain - the membrane proton channel. These two domains are linked by a central stalk rotating inside the F(1) region and a stationary peripheral stalk. During catalysis, ATP synthesis in the catalytic domain of F(1) is coupled via a rotary mechanism of the central stalk subunits to proton translocation. In vivo, can only synthesize ATP although its ATP hydrolase activity can be activated artificially in vitro. Part of the complex F(0) domain. In Pongo abelii (Sumatran orangutan), this protein is ATP synthase F(0) complex subunit g, mitochondrial.